The primary structure comprises 312 residues: Ubiquinone biosynthesis protein COQ9, mitochondrial (312 aa).

The N-terminal 45 residues, 1 to 45 (MAATAAVSGVLRRLGWRLLQLRCLPVARCQSPLMPRAFHTAVGFR), are a transit peptide targeting the mitochondrion. The short motif at 17-32 (RLLQLRCLPVARCQSP) is the SIFI-degron element. The segment at 43–92 (GFRSSEEQRQQPPHSSQQHSETQGPEFSRPPPRYTDQSGEEEEDYESEEQ) is disordered. Positions 52-63 (QQPPHSSQQHSE) are enriched in low complexity. S80 carries the phosphoserine modification. Residues 80–91 (SGEEEEDYESEE) are compositionally biased toward acidic residues. Residue K169 is modified to N6-acetyllysine. Position 238 (R238) interacts with a 1,2-diacylglycero-3-phosphoethanolamine.

The protein belongs to the COQ9 family. As to quaternary structure, homodimer. Heterodimer; two heterodimers of COQ7:COQ9 come together on the same side of the lipid pseudo-bilayer and form a curved tetramer with a hydrophobic surface suitable for membrane interaction. These two tetramers assemble into a soluble octamer with a pseudo-bilayer of lipids captured within. Interacts with COQ7; this interaction allows ubiquinone (CoQ) isoprene intermediates presentation to COQ7 and facilitates the COQ7-mediated hydroxylase step. In terms of processing, in response to mitochondrial stress, the precursor protein is ubiquitinated by the SIFI complex in the cytoplasm before mitochondrial import, leading to its degradation. Within the SIFI complex, UBR4 initiates ubiquitin chain that are further elongated or branched by KCMF1.

The protein resides in the mitochondrion. Its pathway is cofactor biosynthesis; ubiquinone biosynthesis. In terms of biological role, membrane-associated protein that warps the membrane surface to access and bind aromatic isoprenes with high specificity, including ubiquinone (CoQ) isoprene intermediates and presents them directly to COQ7, therefore facilitating the COQ7-mediated hydroxylase step. Participates in the biosynthesis of coenzyme Q, also named ubiquinone, an essential lipid-soluble electron transporter for aerobic cellular respiration. The protein is Ubiquinone biosynthesis protein COQ9, mitochondrial of Rattus norvegicus (Rat).